Consider the following 194-residue polypeptide: Putative manganese efflux pump MntP (194 aa).

A run of 6 helical transmembrane segments spans residues P3–G23, L37–L57, D69–L89, L110–F132, C147–G167, and M172–G192.

The protein belongs to the MntP (TC 9.B.29) family.

The protein resides in the cell inner membrane. Probably functions as a manganese efflux pump. The sequence is that of Putative manganese efflux pump MntP from Xanthomonas axonopodis pv. citri (strain 306).